A 190-amino-acid chain; its full sequence is Protein LZIC (190 aa).

Residues 2 to 63 adopt a coiled-coil conformation; the sequence is ASRGKTETSK…SEFNDSLKKI (62 aa).

Belongs to the CTNNBIP1 family. In terms of assembly, does not interact with CTNNB1. Ubiquitously expressed, with highest levels in kidney. Up-regulated in several cases of gastric cancers.

The chain is Protein LZIC (LZIC) from Homo sapiens (Human).